We begin with the raw amino-acid sequence, 95 residues long: Protein TusB (95 aa).

Belongs to the DsrH/TusB family. As to quaternary structure, heterohexamer, formed by a dimer of trimers. The hexameric TusBCD complex contains 2 copies each of TusB, TusC and TusD. The TusBCD complex interacts with TusE.

It is found in the cytoplasm. Its function is as follows. Part of a sulfur-relay system required for 2-thiolation of 5-methylaminomethyl-2-thiouridine (mnm(5)s(2)U) at tRNA wobble positions. The chain is Protein TusB from Salmonella arizonae (strain ATCC BAA-731 / CDC346-86 / RSK2980).